Here is a 463-residue protein sequence, read N- to C-terminus: Glutamate--tRNA ligase 2 (463 aa).

The short motif at 10-20 (PSPTGYLHIGG) is the 'HIGH' region element. Positions 238 to 242 (KLSKR) match the 'KMSKS' region motif. Lysine 241 is an ATP binding site.

The protein belongs to the class-I aminoacyl-tRNA synthetase family. Glutamate--tRNA ligase type 1 subfamily. As to quaternary structure, monomer.

The protein localises to the cytoplasm. The enzyme catalyses tRNA(Glu) + L-glutamate + ATP = L-glutamyl-tRNA(Glu) + AMP + diphosphate. Its function is as follows. Catalyzes the attachment of glutamate to tRNA(Glu) in a two-step reaction: glutamate is first activated by ATP to form Glu-AMP and then transferred to the acceptor end of tRNA(Glu). In Helicobacter acinonychis (strain Sheeba), this protein is Glutamate--tRNA ligase 2.